The following is a 492-amino-acid chain: Gamma-aminobutyric acid receptor subunit alpha-3 (492 aa).

The signal sequence occupies residues 1–28 (MIITQMSQFYMAGLGLLFLINILPGTTG). Over 29-274 (QVESRRQEPG…MTTHFHLKRK (246 aa)) the chain is Extracellular. N63 carries N-linked (GlcNAc...) asparagine glycosylation. R119 contacts 4-aminobutanoate. N163 and N176 each carry an N-linked (GlcNAc...) asparagine glycan. Residue T182 coordinates 4-aminobutanoate. C191 and C205 are joined by a disulfide. N228 carries N-linked (GlcNAc...) asparagine glycosylation. A helical transmembrane segment spans residues 275-295 (IGYFVIQTYLPCIMTVILSQV). The Cytoplasmic portion of the chain corresponds to 296 to 305 (SFWLNRESVP). A helical membrane pass occupies residues 306–325 (ARTVFGVTTVLTMTTLSISA). Residues 326–336 (RNSLPKVAYAT) are Extracellular-facing. A helical transmembrane segment spans residues 337 to 357 (AMDWFMAVCYAFVFSALIEFA). Topologically, residues 358 to 457 (TVNYFTKRSW…TYNSVSKVDK (100 aa)) are cytoplasmic. S426 carries the phosphoserine modification. T427 is modified (phosphothreonine). At S433 the chain carries Phosphoserine. Residues 458 to 478 (ISRIIFPVLFAIFNLVYWATY) form a helical membrane-spanning segment. Residues 479 to 492 (VNRESAIKGMIRKQ) are Extracellular-facing.

This sequence belongs to the ligand-gated ion channel (TC 1.A.9) family. Gamma-aminobutyric acid receptor (TC 1.A.9.5) subfamily. GABRA3 sub-subfamily. Heteropentamer, formed by a combination of alpha (GABRA1-6), beta (GABRB1-3), gamma (GABRG1-3), delta (GABRD), epsilon (GABRE), rho (GABRR1-3), pi (GABRP) and theta (GABRQ) chains, each subunit exhibiting distinct physiological and pharmacological properties. Binds UBQLN1. Interacts with GPHN.

It localises to the postsynaptic cell membrane. The protein resides in the cell membrane. It carries out the reaction chloride(in) = chloride(out). Alpha subunit of the heteropentameric ligand-gated chloride channel gated by gamma-aminobutyric acid (GABA), a major inhibitory neurotransmitter in the brain. GABA-gated chloride channels, also named GABA(A) receptors (GABAAR), consist of five subunits arranged around a central pore and contain GABA active binding site(s) located at the alpha and beta subunit interface(s). When activated by GABA, GABAARs selectively allow the flow of chloride anions across the cell membrane down their electrochemical gradient. Chloride influx into the postsynaptic neuron following GABAAR opening decreases the neuron ability to generate a new action potential, thereby reducing nerve transmission. This Bos taurus (Bovine) protein is Gamma-aminobutyric acid receptor subunit alpha-3 (GABRA3).